The sequence spans 77 residues: Small ribosomal subunit protein bS20 (77 aa).

Belongs to the bacterial ribosomal protein bS20 family.

Functionally, binds directly to 16S ribosomal RNA. The protein is Small ribosomal subunit protein bS20 of Streptococcus uberis (strain ATCC BAA-854 / 0140J).